We begin with the raw amino-acid sequence, 367 residues long: AdoMet-dependent heme synthase (367 aa).

In terms of domain architecture, Radical SAM core spans aspartate 15–alanine 238. [4Fe-4S] cluster contacts are provided by cysteine 31, cysteine 35, and cysteine 38.

This sequence belongs to the radical SAM superfamily. Requires [4Fe-4S] cluster as cofactor.

The enzyme catalyses Fe-coproporphyrin III + 2 S-adenosyl-L-methionine = heme b + 2 5'-deoxyadenosine + 2 L-methionine + 2 CO2. It functions in the pathway porphyrin-containing compound metabolism; protoheme biosynthesis. In terms of biological role, involved in siroheme-dependent heme b biosynthesis. Catalyzes the conversion of Fe-coproporphyrin III into heme by the oxidative decarboxylation of two propionate side chains. This chain is AdoMet-dependent heme synthase, found in Nitratidesulfovibrio vulgaris (strain ATCC 29579 / DSM 644 / CCUG 34227 / NCIMB 8303 / VKM B-1760 / Hildenborough) (Desulfovibrio vulgaris).